Here is a 354-residue protein sequence, read N- to C-terminus: Guanine nucleotide-binding protein G(t) subunit alpha-3 (354 aa).

The segment at 1–27 (MGSGISSESKESAKRSKELEKKLQEDA) is disordered. The N-myristoyl glycine moiety is linked to residue G2. The segment covering 8–27 (ESKESAKRSKELEKKLQEDA) has biased composition (basic and acidic residues). Positions 32–354 (RTVKLLLLGA…KENLKDCGLF (323 aa)) constitute a G-alpha domain. The segment at 35–48 (KLLLLGAGESGKST) is G1 motif. GTP-binding positions include 40-47 (GAGESGKS), 175-181 (LHSRVKT), 200-204 (DVGGQ), 269-272 (NKKD), and A326. Residues S47 and T181 each contribute to the Mg(2+) site. The interval 173–181 (DVLHSRVKT) is G2 motif. Positions 196-205 (FRMFDVGGQR) are G3 motif. Residues 265 to 272 (VLFLNKKD) are G4 motif. A G5 motif region spans residues 324–329 (TCATDT).

This sequence belongs to the G-alpha family. G(i/o/t/z) subfamily. In terms of assembly, g proteins are composed of 3 units; alpha, beta and gamma, respectively GNAT3, GNB1 and GNG13 for Gustducin heterotrimer for bitter taste transduction. The alpha chain contains the guanine nucleotide binding site. Component of the TAS2R14-GNAT3 complex, consisting of TAS2R14, GNAT3, GNB1 and GNG2; within the complex interacts with TAS2R14; this complex plays a role in the perception of bitterness. Gustducin heterotrimer may also be composed of GNAT3, GNB3 and GNG13. In terms of processing, potential N-myristoylation may anchor alpha-subunit to the inner surface of plasma membrane. Expressed in taste buds (sensory organs of clustered epithelial cells) of the circumvallate and foliate papillae of the tongue at protein level. Expressed in enteroendocrine L cells of the gut. Detected also in spermatozoa.

The protein resides in the cytoplasm. In terms of biological role, guanine nucleotide-binding protein (G protein) alpha subunit playing a prominent role in bitter and sweet taste transduction as well as in umami (monosodium glutamate, monopotassium glutamate, and inosine monophosphate) taste transduction. Transduction by this alpha subunit involves coupling of specific cell-surface receptors with a cGMP-phosphodiesterase; Activation of phosphodiesterase lowers intracellular levels of cAMP and cGMP which may open a cyclic nucleotide-suppressible cation channel leading to influx of calcium, ultimately leading to release of neurotransmitter. Indeed, denatonium and strychnine induce transient reduction in cAMP and cGMP in taste tissue, whereas this decrease is inhibited by GNAT3 antibody. Gustducin heterotrimer transduces response to bitter and sweet compounds via regulation of phosphodiesterase for alpha subunit, as well as via activation of phospholipase C for beta and gamma subunits, with ultimate increase inositol trisphosphate and increase of intracellular Calcium. GNAT3 can functionally couple to taste receptors to transmit intracellular signal: receptor heterodimer TAS1R2/TAS1R3 senses sweetness and TAS1R1/TAS1R3 transduces umami taste, whereas the T2R family GPCRs such as TAS2R14 act as bitter sensors. Also functions as lumenal sugar sensors in the gut to control the expression of the Na+-glucose transporter SGLT1 in response to dietaty sugar, as well as the secretion of Glucagon-like peptide-1, GLP-1 and glucose-dependent insulinotropic polypeptide, GIP. Thus, may modulate the gut capacity to absorb sugars, with implications in malabsorption syndromes and diet-related disorders including diabetes and obesity. This is Guanine nucleotide-binding protein G(t) subunit alpha-3 (GNAT3) from Homo sapiens (Human).